Reading from the N-terminus, the 78-residue chain is Short neurotoxin OH-26 (78 aa).

A signal peptide spans 1 to 21 (MKNLLLTFLVVTIVCLDLGYT). Cystine bridges form between cysteine 24–cysteine 40, cysteine 33–cysteine 58, cysteine 62–cysteine 70, and cysteine 71–cysteine 76.

The protein belongs to the three-finger toxin family. Short-chain subfamily. Expressed by the venom gland.

The protein localises to the secreted. Its function is as follows. This three-finger toxin binds and inhibits the nicotinic acetylcholine receptor (nAChR). The chain is Short neurotoxin OH-26 from Ophiophagus hannah (King cobra).